Consider the following 457-residue polypeptide: Paired box protein Pax-8 (457 aa).

The paired DNA-binding region spans 9–135; the sequence is GHGGLNQLGG…SSINRIIRTK (127 aa). The tract at residues 12–68 is PAI subdomain; that stretch reads GLNQLGGAFVNGRPLPEVVRQRIVDLAHQGVRPCDISRQLRVSHGCVSKILGRYYET. The tract at residues 87–135 is RED subdomain; the sequence is KVVEKIGDYKRQNPTMFAWEIRDRLLAEGVCDNDTVPSVSSINRIIRTK. Polar residues predominate over residues 159 to 182; the sequence is LIPSSAVTPPESPQSDSLGSTYSI. Residues 159–226 are disordered; it reads LIPSSAVTPP…SSGPRKHLRT (68 aa). A Phosphoserine modification is found at serine 304.

As to quaternary structure, interacts with WWTR1.

Its subcellular location is the nucleus. Functionally, thought to encode a transcription factor. It may have a role in kidney cell differentiation. May play a regulatory role in mammalian development. This chain is Paired box protein Pax-8 (Pax8), found in Rattus norvegicus (Rat).